A 451-amino-acid polypeptide reads, in one-letter code: MNLEGGGRGGEFGMSAVSCGNGKLRQWLIDQIDSGKYPGLVWENEEKSIFRIPWKHAGKQDYNREEDAALFKAWALFKGKFREGIDKPDPPTWKTRLRCALNKSNDFEELVERSQLDISDPYKVYRIVPEGAKKGAKQLTLEDPQMSMSHPYTMTTPYPSLPAQQVHNYMMPPLDRSWRDYVPDQPHPEIPYQCPMTFGPRGHHWQGPACENGCQVTGTFYACAPPESQAPGVPTEPSIRSAEALAFSDCRLHICLYYREILVKELTTSSPEGCRISHGHTYDASNLDQVLFPYPEDNGQRKNIEKLLSHLERGVVLWMAPDGLYAKRLCQSRIYWDGPLALCNDRPNKLERDQTCKLFDTQQFLSELQAFAHHGRSLPRFQVTLCFGEEFPDPQRQRKLITAHVEPLLARQLYYFAQQNSGHFLRGYDLPEHISNPEDYHRSIRHSSIQE.

Positions 21-129 (NGKLRQWLID…DPYKVYRIVP (109 aa)) form a DNA-binding region, IRF tryptophan pentad repeat. Phosphoserine; by ROCK2 occurs at positions 447 and 448.

Belongs to the IRF family. In terms of assembly, interacts with the BATF-JUNB heterodimer. Interacts with BATF (via bZIP domain); the interaction is direct. Interacts with SPIB. Interacts with DEF6. Directly interacts with NLRP3 in the nucleus of Th2 cells; this interaction enhances IRF4 ability to bind to the IL4 promoter and is required for optimal IRF4-dependent IL4 transcription. Interacts with SPI1. Post-translationally, phosphorylation by ROCK2 regulates IL-17 and IL-21 production. Lymphoid cells.

It localises to the nucleus. Its subcellular location is the cytoplasm. Its function is as follows. Transcriptional activator. Binds to the interferon-stimulated response element (ISRE) of the MHC class I promoter. Binds the immunoglobulin lambda light chain enhancer, together with PU.1. Probably plays a role in ISRE-targeted signal transduction mechanisms specific to lymphoid cells. Involved in CD8(+) dendritic cell differentiation by forming a complex with the BATF-JUNB heterodimer in immune cells, leading to recognition of AICE sequence (5'-TGAnTCA/GAAA-3'), an immune-specific regulatory element, followed by cooperative binding of BATF and IRF4 and activation of genes. In Homo sapiens (Human), this protein is Interferon regulatory factor 4.